Reading from the N-terminus, the 454-residue chain is Asparagine--tRNA ligase (454 aa).

This sequence belongs to the class-II aminoacyl-tRNA synthetase family. As to quaternary structure, homodimer.

The protein localises to the cytoplasm. The catalysed reaction is tRNA(Asn) + L-asparagine + ATP = L-asparaginyl-tRNA(Asn) + AMP + diphosphate + H(+). This is Asparagine--tRNA ligase from Mycoplasma capricolum subsp. capricolum (strain California kid / ATCC 27343 / NCTC 10154).